Reading from the N-terminus, the 239-residue chain is tRNA (guanine-N(7)-)-methyltransferase (239 aa).

Positions 69, 94, 121, and 144 each coordinate S-adenosyl-L-methionine. Aspartate 144 is a catalytic residue. Lysine 148 provides a ligand contact to substrate. The interval 150–155 (RHNKRR) is interaction with RNA. Residues aspartate 180 and 217–220 (TKFE) contribute to the substrate site.

Belongs to the class I-like SAM-binding methyltransferase superfamily. TrmB family. As to quaternary structure, monomer.

It catalyses the reaction guanosine(46) in tRNA + S-adenosyl-L-methionine = N(7)-methylguanosine(46) in tRNA + S-adenosyl-L-homocysteine. It functions in the pathway tRNA modification; N(7)-methylguanine-tRNA biosynthesis. Catalyzes the formation of N(7)-methylguanine at position 46 (m7G46) in tRNA. The polypeptide is tRNA (guanine-N(7)-)-methyltransferase (Sodalis glossinidius (strain morsitans)).